A 186-amino-acid polypeptide reads, in one-letter code: Elongation factor P (186 aa).

It belongs to the elongation factor P family.

The protein resides in the cytoplasm. It participates in protein biosynthesis; polypeptide chain elongation. Involved in peptide bond synthesis. Stimulates efficient translation and peptide-bond synthesis on native or reconstituted 70S ribosomes in vitro. Probably functions indirectly by altering the affinity of the ribosome for aminoacyl-tRNA, thus increasing their reactivity as acceptors for peptidyl transferase. The protein is Elongation factor P of Prochlorococcus marinus (strain MIT 9215).